Consider the following 74-residue polypeptide: Exodeoxyribonuclease 7 small subunit (74 aa).

It belongs to the XseB family. Heterooligomer composed of large and small subunits.

It localises to the cytoplasm. The catalysed reaction is Exonucleolytic cleavage in either 5'- to 3'- or 3'- to 5'-direction to yield nucleoside 5'-phosphates.. Bidirectionally degrades single-stranded DNA into large acid-insoluble oligonucleotides, which are then degraded further into small acid-soluble oligonucleotides. The protein is Exodeoxyribonuclease 7 small subunit of Leuconostoc citreum (strain KM20).